The chain runs to 272 residues: Cytochrome b-c1 complex subunit Rieske-2, mitochondrial (272 aa).

A mitochondrion-targeting transit peptide spans 1-60 (MLRIAGRRASSLSRWPVRSVAPSSSAFISANHFSSDDDSSSPRSISPSLASVFLHHTRGF). The Mitochondrial matrix segment spans residues 61–109 (SSNSVSHAHDMGLVPDLPPTVAAIKNPTSKIVYDEHNHERYPPGDPSKR). A helical membrane pass occupies residues 110–132 (AFAYFVLTGGRFVYASLVRLLIL). Residues 133–272 (KFVLSMSASK…FLEENKLLIG (140 aa)) lie on the Mitochondrial intermembrane side of the membrane. The Rieske domain occupies 182–270 (INLANSVDLG…YSFLEENKLL (89 aa)). Positions 215, 217, 234, and 237 each coordinate [2Fe-2S] cluster. Residues C220 and C236 are joined by a disulfide bond.

Belongs to the Rieske iron-sulfur protein family. In terms of assembly, component of the ubiquinol-cytochrome c oxidoreductase (cytochrome b-c1 complex, complex III, CIII), a multisubunit enzyme composed of 3 respiratory subunits cytochrome b, cytochrome c1 and Rieske protein, 2 core protein subunits, and several low-molecular weight protein subunits. The complex exists as an obligatory dimer and forms supercomplexes (SCs) in the inner mitochondrial membrane with cytochrome c oxidase (complex IV, CIV). [2Fe-2S] cluster serves as cofactor. High levels are seen in the flowers while a low level expression is seen in the roots, leaves and stems.

It localises to the mitochondrion inner membrane. It carries out the reaction a quinol + 2 Fe(III)-[cytochrome c](out) = a quinone + 2 Fe(II)-[cytochrome c](out) + 2 H(+)(out). Component of the ubiquinol-cytochrome c oxidoreductase, a multisubunit transmembrane complex that is part of the mitochondrial electron transport chain which drives oxidative phosphorylation. The respiratory chain contains 3 multisubunit complexes succinate dehydrogenase (complex II, CII), ubiquinol-cytochrome c oxidoreductase (cytochrome b-c1 complex, complex III, CIII) and cytochrome c oxidase (complex IV, CIV), that cooperate to transfer electrons derived from NADH and succinate to molecular oxygen, creating an electrochemical gradient over the inner membrane that drives transmembrane transport and the ATP synthase. The cytochrome b-c1 complex catalyzes electron transfer from ubiquinol to cytochrome c, linking this redox reaction to translocation of protons across the mitochondrial inner membrane, with protons being carried across the membrane as hydrogens on the quinol. In the process called Q cycle, 2 protons are consumed from the matrix, 4 protons are released into the intermembrane space and 2 electrons are passed to cytochrome c. The Rieske protein is a catalytic core subunit containing a [2Fe-2S] iron-sulfur cluster. It cycles between 2 conformational states during catalysis to transfer electrons from the quinol bound in the Q(0) site in cytochrome b to cytochrome c1. The protein is Cytochrome b-c1 complex subunit Rieske-2, mitochondrial of Nicotiana tabacum (Common tobacco).